The chain runs to 487 residues: Vacuolar protein sorting-associated protein 30 (487 aa).

The interval 33-129 (PQTLKKSSVP…DNPDAPMGSE (97 aa)) is disordered. Residues 52–62 (QSRKSIYDRVS) are compositionally biased toward basic and acidic residues. Positions 81–94 (SSMSFVLLSESQMA) are enriched in polar residues. Positions 152–282 (VECTEMLVEG…DSQLLEKLQR (131 aa)) form a coiled coil. Positions 283-480 (SNVYNDTFCI…LAHASNVTSN (198 aa)) are BARA. A required for membrane-association, autophagic function during starvation and normal autophagosome morphology region spans residues 456 to 481 (WTKACKLTLTCCKFLLAHASNVTSNA).

Belongs to the beclin family. In terms of assembly, component of the autophagy-specific VPS34 PI3-kinase complex I; and of the VPS34 PI3-kinase complex II.

It localises to the endosome membrane. Its subcellular location is the vacuole membrane. It is found in the preautophagosomal structure membrane. Required for cytoplasm to vacuole transport (Cvt), autophagy, nucleophagy, and mitophagy, as a part of the autophagy-specific VPS34 PI3-kinase complex I. This complex is essential to recruit the ATG8-phosphatidylinositol conjugate and the ATG12-ATG5 conjugate to the pre-autophagosomal structure. Also involved in endosome-to-Golgi retrograde transport as part of the VPS34 PI3-kinase complex II. Autophagy is required for proper vegetative growth, asexual/sexual reproduction, and full virulence. Autophagy is particularly involved in the biosynthesis of deoxynivalenol (DON), an important virulence determinant. The polypeptide is Vacuolar protein sorting-associated protein 30 (Gibberella zeae (strain ATCC MYA-4620 / CBS 123657 / FGSC 9075 / NRRL 31084 / PH-1) (Wheat head blight fungus)).